The primary structure comprises 338 residues: UDP-3-O-acylglucosamine N-acyltransferase (338 aa).

The active-site Proton acceptor is His-243.

It belongs to the transferase hexapeptide repeat family. LpxD subfamily. Homotrimer.

It carries out the reaction a UDP-3-O-[(3R)-3-hydroxyacyl]-alpha-D-glucosamine + a (3R)-hydroxyacyl-[ACP] = a UDP-2-N,3-O-bis[(3R)-3-hydroxyacyl]-alpha-D-glucosamine + holo-[ACP] + H(+). The protein operates within bacterial outer membrane biogenesis; LPS lipid A biosynthesis. Catalyzes the N-acylation of UDP-3-O-acylglucosamine using 3-hydroxyacyl-ACP as the acyl donor. Is involved in the biosynthesis of lipid A, a phosphorylated glycolipid that anchors the lipopolysaccharide to the outer membrane of the cell. This is UDP-3-O-acylglucosamine N-acyltransferase from Amoebophilus asiaticus (strain 5a2).